A 279-amino-acid chain; its full sequence is uncharacterized protein (279 aa).

The protein belongs to the peptidase C59 family.

This is an uncharacterized protein from Chlorella (PBCV-1).